The primary structure comprises 747 residues: Catalase-peroxidase 1 (747 aa).

Residues 1–22 (MTDTSDARPPHSDDKTRSHSES) are compositionally biased toward basic and acidic residues. Residues 1 to 39 (MTDTSDARPPHSDDKTRSHSESENPAIDSPEPKVHAPLT) are disordered. A cross-link (tryptophyl-tyrosyl-methioninium (Trp-Tyr) (with M-266)) is located at residues 112-240 (WHAAGTYRIF…FGATTMGLIY (129 aa)). His-113 serves as the catalytic Proton acceptor. Positions 240–266 (YVNPEGPEGKPDPLAAAHDIRETFGRM) form a cross-link, tryptophyl-tyrosyl-methioninium (Tyr-Met) (with W-112). Residue His-281 coordinates heme b.

The protein belongs to the peroxidase family. Peroxidase/catalase subfamily. As to quaternary structure, homodimer or homotetramer. It depends on heme b as a cofactor. Post-translationally, formation of the three residue Trp-Tyr-Met cross-link is important for the catalase, but not the peroxidase activity of the enzyme.

The enzyme catalyses H2O2 + AH2 = A + 2 H2O. The catalysed reaction is 2 H2O2 = O2 + 2 H2O. Its function is as follows. Bifunctional enzyme with both catalase and broad-spectrum peroxidase activity. This Mycolicibacterium vanbaalenii (strain DSM 7251 / JCM 13017 / BCRC 16820 / KCTC 9966 / NRRL B-24157 / PYR-1) (Mycobacterium vanbaalenii) protein is Catalase-peroxidase 1.